A 183-amino-acid polypeptide reads, in one-letter code: PLAT domain-containing protein 2 (183 aa).

The first 25 residues, 1 to 25 (MMPRRDVLFLSLLLVIATVSAVALA), serve as a signal peptide directing secretion. The PLAT domain maps to 31–158 (CVYTFFLRTG…SPYELSAVRN (128 aa)).

It localises to the endoplasmic reticulum. In terms of biological role, involved in response to abiotic stress. This chain is PLAT domain-containing protein 2, found in Arabidopsis thaliana (Mouse-ear cress).